The sequence spans 375 residues: Platelet-derived growth factor receptor-like protein (375 aa).

The N-terminal stretch at methionine 1–glycine 21 is a signal peptide. The interval glutamine 22–threonine 64 is disordered. Residues proline 40–proline 50 show a composition bias toward basic residues. Residues proline 62–lysine 159 enclose the Ig-like C2-type 1 domain. Cysteine 96 and cysteine 143 are joined by a disulfide. Residues asparagine 132 and asparagine 219 are each glycosylated (N-linked (GlcNAc...) asparagine). The Ig-like C2-type 2 domain maps to proline 272–serine 375. Cysteines 293 and 357 form a disulfide.

Forms a complex composed of PDGFRL, TNK2 and GRB2. Expressed in colon, lung and liver.

The protein resides in the secreted. The polypeptide is Platelet-derived growth factor receptor-like protein (PDGFRL) (Homo sapiens (Human)).